A 348-amino-acid polypeptide reads, in one-letter code: MKNLLGCSVKDLEKIALNYGQAAFRGRQIYNWLYNYKNRSKSIDEINVLPLKFRDQLKNEAFLFGELTLKEKYLATDGTLKLLLNTRDNESVECVGIPTEKRLTACLSSQVGCPMDCKFCATGKEGLKRSLKVSEILDQILFIENQMNQKVSNIVFMGMGEPLLNIDELLLSIRSINEDFAISQRKITVSTVAIPKMISKLSELSFQVLGKCQFTLAISLHASNQKIREAIIPSAKNYHIKNIIDDCREYVRETGRRVSFEYLMLHGVNDKLEHADELSNLIKGFQCHVNLIQYNHIEEVEFKQTPIKNAQLFQTRLSNSGINVSFRKSRGSDRNAACGQLRQNDKIK.

E93 serves as the catalytic Proton acceptor. In terms of domain architecture, Radical SAM core spans 99-323; the sequence is TEKRLTACLS…QTRLSNSGIN (225 aa). A disulfide bond links C106 and C338. [4Fe-4S] cluster contacts are provided by C113, C117, and C120. Residues 160-161, S190, 219-221, and N295 contribute to the S-adenosyl-L-methionine site; these read GE and SLH. Catalysis depends on C338, which acts as the S-methylcysteine intermediate.

It belongs to the radical SAM superfamily. RlmN family. It depends on [4Fe-4S] cluster as a cofactor.

The protein localises to the cytoplasm. The catalysed reaction is adenosine(2503) in 23S rRNA + 2 reduced [2Fe-2S]-[ferredoxin] + 2 S-adenosyl-L-methionine = 2-methyladenosine(2503) in 23S rRNA + 5'-deoxyadenosine + L-methionine + 2 oxidized [2Fe-2S]-[ferredoxin] + S-adenosyl-L-homocysteine. The enzyme catalyses adenosine(37) in tRNA + 2 reduced [2Fe-2S]-[ferredoxin] + 2 S-adenosyl-L-methionine = 2-methyladenosine(37) in tRNA + 5'-deoxyadenosine + L-methionine + 2 oxidized [2Fe-2S]-[ferredoxin] + S-adenosyl-L-homocysteine. In terms of biological role, specifically methylates position 2 of adenine 2503 in 23S rRNA and position 2 of adenine 37 in tRNAs. The sequence is that of Probable dual-specificity RNA methyltransferase RlmN from Prochlorococcus marinus subsp. pastoris (strain CCMP1986 / NIES-2087 / MED4).